The primary structure comprises 110 residues: MRYLKYKRYIMDSIDSRDLLDLVKYPIITDKTTKLLEENQYCFAVDPNATKINIKAAIQYIFNVQVTGVNTCHPPKKKRSIGRFIGKRPHYKKAIITLASKDSINLFPET.

Belongs to the universal ribosomal protein uL23 family. In terms of assembly, part of the 50S ribosomal subunit.

Its subcellular location is the plastid. The protein resides in the chloroplast. Its function is as follows. Binds to 23S rRNA. In Porphyra purpurea (Red seaweed), this protein is Large ribosomal subunit protein uL23c (rpl23).